Reading from the N-terminus, the 81-residue chain is MKAGIHPDYKKVVFMDTNTGFKFLSGSTKGSSETVEWEDGNTYPLLKVEISSDSHPFYTGRQKFATADGRVDRFNKKYGIK.

Belongs to the bacterial ribosomal protein bL31 family. Type B subfamily. Part of the 50S ribosomal subunit.

The chain is Large ribosomal subunit protein bL31B from Bacillus cereus (strain G9842).